Reading from the N-terminus, the 1289-residue chain is Pesticidal crystal protein Cry5Ab (1289 aa).

The segment at 1263 to 1289 (PLPTDDQNSEGNTASSTNSDTSMNNNQ) is disordered. Over residues 1274 to 1289 (NTASSTNSDTSMNNNQ) the composition is skewed to low complexity.

It belongs to the delta endotoxin family.

In terms of biological role, endotoxin with nematicidal activity. In Bacillus thuringiensis subsp. darmstadiensis, this protein is Pesticidal crystal protein Cry5Ab (cry5Ab).